Consider the following 1489-residue polypeptide: ZEB2-regulated ABC transporter 1 (1489 aa).

The disordered stretch occupies residues 1-55; sequence MALPEANMSSTRSEQSSRSHDTIVGNEQPHSEKPAASAPGDQMSSDDEDEGPQTE. N-linked (GlcNAc...) asparagine glycosylation is present at N7. The segment covering 44-53 has biased composition (acidic residues); the sequence is SSDDEDEGPQ. Residues N70, N73, N118, N332, and N469 are each glycosylated (N-linked (GlcNAc...) asparagine). The region spanning 152-408 is the ABC transporter 1 domain; sequence LGLPDMVHQM…FINLGFECPD (257 aa). Helical transmembrane passes span 513–533, 552–572, 599–619, 628–648, and 662–682; these read LLGSPGVTIFQLIANTAVAFI, GATLFLAVLSNAFASALEILT, ILVDMPYKITNSILFNVTLYF, GAFFFFLLVSFIMVLAMSGVF, and MVPASLLILALVIFAGFVVPV. A glycan (N-linked (GlcNAc...) asparagine) is linked at N714. The chain crosses the membrane as a helical span at residues 773–793; it reads GILIAMTIFNHVVYIVATEFI. The disordered stretch occupies residues 811 to 834; the sequence is PSKAKSDPEASSSRPIPTTEKNNN. Residues 819–834 are compositionally biased toward polar residues; sequence EASSSRPIPTTEKNNN. The 243-residue stretch at 846 to 1088 folds into the ABC transporter 2 domain; the sequence is FHWNDVCYDI…TLTNYFVKHG (243 aa). 882-889 is an ATP binding site; that stretch reads GVSGAGKT. The next 5 membrane-spanning stretches (helical) occupy residues 1190–1210, 1218–1238, 1269–1289, 1307–1327, and 1333–1353; these read ALCIQVGLFLGLVFLNAPLSL, FAIFQMLTVFGQLVQMQMPHF, IPWNTLMSVFLFVCIYYPVGF, WLLIWQFLIFTCTFAHAAIAI, and AGGNLANVVFMMSLFFCGVLA. N-linked (GlcNAc...) asparagine glycosylation occurs at N1402. Residues 1457–1477 traverse the membrane as a helical segment; sequence GIGMVYIVVNIVGALFLYWLI.

Belongs to the ABC transporter superfamily. ABCG family. PDR (TC 3.A.1.205) subfamily.

It localises to the cell membrane. The protein localises to the vacuole membrane. In terms of biological role, ABC transporter involved in zearalenone production. This chain is ZEB2-regulated ABC transporter 1, found in Gibberella zeae (strain ATCC MYA-4620 / CBS 123657 / FGSC 9075 / NRRL 31084 / PH-1) (Wheat head blight fungus).